The sequence spans 923 residues: MKSDFKFSNLLGTVYRQGNITFSDDGKQLLSPVGNRVSVFDLINNKSFTFEYEHRKNIAAIDLNKQGTLLISIDEDGRAILVNFKARNVLHHFNFKEKCSAVKFSPDGRLFALASGRFLQIWKTPDVNKDRQFAPFVRHRVHAGHFQDITSLTWSQDSRFILTTSKDLSAKIWSVDSEEKNLAATTFNGHRDYVMGAFFSHDQEKIYTVSKDGAVFVWEFTKRPSDDDDNESEDDDKQEEVDISKYSWRITKKHFFYANQAKVKCVTFHPATRLLAVGFTSGEFRLYDLPDFTLIQQLSMGQNPVNTVSVNQTGEWLAFGSSKLGQLLVYEWQSESYILKQQGHFDSTNSLAYSPDGSRVVTASEDGKIKVWDITSGFCLATFEEHTSSVTAVQFAKRGQVMFSSSLDGTVRAWDLIRYRNFRTFTGTERIQFNCLAVDPSGEVVCAGSLDNFDIHVWSVQTGQLLDALSGHEGPVSCLSFSQENSVLASASWDKTIRIWSIFGRSQQVEPIEVYSDVLALSMRPDGKEVAVSTLKGQISIFNIEDAKQVGNIDCRKDIISGRFNQDRFTAKNSERSKFFTTIHYSFDGMAIVAGGNNNSICLYDVPNEVLLKRFIVSRNMALNGTLEFLNSKKMTEAGSLDLIDDAGENSDLEDRIDNSLPGSQRGGDLSTRKMRPEVRVTSVQFSPTANAFAAASTEGLLIYSTNDTILFDPFDLDVDVTPHSTVEALREKQFLNALVMAFRLNEEYLINKVYEAIPIKEIPLVASNIPAIYLPRILKFIGDFAIESQHIEFNLIWIKALLSASGGYINEHKYLFSTAMRSIQRFIVRVAKEVVNTTTDNKYTYRFLVSTDGSMEDGAADDDEVLLKDDADEDNEENEENDVVMESDDEEGWIGFNGKDNKLPLSNENDSSDEEENEKELP.

5 WD repeats span residues 12–52, 53–93, 94–132, 144–183, and 189–228; these read GTVY…TFEY, EHRK…LHHF, NFKE…KDRQ, GHFQ…KNLA, and GHRD…SDDD. Residues Ser-225 and Ser-232 each carry the phosphoserine modification. WD repeat units follow at residues 258-297, 300-340, 343-382, 385-424, 428-470, 471-510, 513-552, and 575-614; these read ANQA…LIQQ, MGQN…YILK, GHFD…CLAT, EHTS…NFRT, TERI…DALS, GHEG…QQVE, EVYS…QVGN, and ERSK…LLKR. A phosphoserine mark is found at Ser-651 and Ser-664. Positions 653–674 are disordered; it reads LEDRIDNSLPGSQRGGDLSTRK. A WD 14 repeat occupies 676-714; that stretch reads RPEVRVTSVQFSPTANAFAAASTEGLLIYSTNDTILFDP. Composition is skewed to acidic residues over residues 869-893 and 911-923; these read KDDA…DEEG and DSSD…KELP. Residues 869–923 form a disordered region; the sequence is KDDADEDNEENEENDVVMESDDEEGWIGFNGKDNKLPLSNENDSSDEEENEKELP. Phosphoserine is present on residues Ser-912 and Ser-913.

It belongs to the WD repeat PWP2 family. In terms of assembly, interacts with snoRNA U3. Interacts with MPP10. Component of the ribosomal small subunit (SSU) processome composed of at least 40 protein subunits and snoRNA U3.

It localises to the nucleus. It is found in the nucleolus. Required for bud-site selection and cell separation. Also involved in nucleolar processing of pre-18S ribosomal RNA. The chain is Periodic tryptophan protein 2 (PWP2) from Saccharomyces cerevisiae (strain ATCC 204508 / S288c) (Baker's yeast).